The primary structure comprises 176 residues: uncharacterized protein (176 aa).

Positions M1–S22 are cleaved as a signal peptide. A disulfide bond links C38 and C78.

It belongs to the fimbrial protein family.

It localises to the fimbrium. This is an uncharacterized protein from Escherichia coli (strain K12).